Consider the following 69-residue polypeptide: MPLTVNCPICKTPVEWVPQSEFKPFCSERCKMIDLGDWASEKHAIPVKSEFDLDALDELGYDEESFFKE.

4 residues coordinate Zn(2+): cysteine 7, cysteine 10, cysteine 26, and cysteine 30.

Belongs to the DNA gyrase inhibitor YacG family. In terms of assembly, interacts with GyrB. It depends on Zn(2+) as a cofactor.

Its function is as follows. Inhibits all the catalytic activities of DNA gyrase by preventing its interaction with DNA. Acts by binding directly to the C-terminal domain of GyrB, which probably disrupts DNA binding by the gyrase. The chain is DNA gyrase inhibitor YacG from Shewanella sp. (strain ANA-3).